A 653-amino-acid polypeptide reads, in one-letter code: MTVSFLRIEIQNCSAGILRFLPRNPDLFAAIKPSSALASLYSTVSGQIEENPKRYEHHNVATCIATLQRCAQRKDYVSGQQIHGFMVRKGFLDDSPRAGTSLVNMYAKCGLMRRAVLVFGGSERDVFGYNALISGFVVNGSPLDAMETYREMRANGILPDKYTFPSLLKGSDAMELSDVKKVHGLAFKLGFDSDCYVGSGLVTSYSKFMSVEDAQKVFDELPDRDDSVLWNALVNGYSQIFRFEDALLVFSKMREEGVGVSRHTITSVLSAFTVSGDIDNGRSIHGLAVKTGSGSDIVVSNALIDMYGKSKWLEEANSIFEAMDERDLFTWNSVLCVHDYCGDHDGTLALFERMLCSGIRPDIVTLTTVLPTCGRLASLRQGREIHGYMIVSGLLNRKSSNEFIHNSLMDMYVKCGDLRDARMVFDSMRVKDSASWNIMINGYGVQSCGELALDMFSCMCRAGVKPDEITFVGLLQACSHSGFLNEGRNFLAQMETVYNILPTSDHYACVIDMLGRADKLEEAYELAISKPICDNPVVWRSILSSCRLHGNKDLALVAGKRLHELEPEHCGGYVLMSNVYVEAGKYEEVLDVRDAMRQQNVKKTPGCSWIVLKNGVHTFFTGNQTHPEFKSIHDWLSLVISHMHGHEYMTVDD.

14 PPR repeats span residues 59-93 (NVATCIATLQRCAQRKDYVSGQQIHGFMVRKGFLD), 95-119 (SPRAGTSLVNMYAKCGLMRRAVLVF), 125-159 (DVFGYNALISGFVVNGSPLDAMETYREMRANGILP), 160-193 (DKYTFPSLLKGSDAMELSDVKKVHGLAFKLGFDS), 194-224 (DCYVGSGLVTSYSKFMSVEDAQKVFDELPDR), 226-260 (DSVLWNALVNGYSQIFRFEDALLVFSKMREEGVGV), 261-295 (SRHTITSVLSAFTVSGDIDNGRSIHGLAVKTGSGS), 296-326 (DIVVSNALIDMYGKSKWLEEANSIFEAMDER), 327-361 (DLFTWNSVLCVHDYCGDHDGTLALFERMLCSGIRP), 362-396 (DIVTLTTVLPTCGRLASLRQGREIHGYMIVSGLLN), 401-431 (NEFIHNSLMDMYVKCGDLRDARMVFDSMRVK), 432-466 (DSASWNIMINGYGVQSCGELALDMFSCMCRAGVKP), 467-497 (DEITFVGLLQACSHSGFLNEGRNFLAQMETV), and 503-537 (TSDHYACVIDMLGRADKLEEAYELAISKPICDNPV). Residues 538 to 613 (VWRSILSSCR…TPGCSWIVLK (76 aa)) form a type E motif region. The interval 614 to 644 (NGVHTFFTGNQTHPEFKSIHDWLSLVISHMH) is type E(+) motif.

This sequence belongs to the PPR family. PCMP-E subfamily.

This is Pentatricopeptide repeat-containing protein At3g14730 (PCMP-E31) from Arabidopsis thaliana (Mouse-ear cress).